The sequence spans 122 residues: Large ribosomal subunit protein uL14 (122 aa).

The protein belongs to the universal ribosomal protein uL14 family. As to quaternary structure, part of the 50S ribosomal subunit. Forms a cluster with proteins L3 and L19. In the 70S ribosome, L14 and L19 interact and together make contacts with the 16S rRNA in bridges B5 and B8.

In terms of biological role, binds to 23S rRNA. Forms part of two intersubunit bridges in the 70S ribosome. The chain is Large ribosomal subunit protein uL14 from Campylobacter fetus subsp. fetus (strain 82-40).